A 426-amino-acid polypeptide reads, in one-letter code: D-tagatose-1,6-bisphosphate aldolase subunit KbaZ (426 aa).

The protein belongs to the GatZ/KbaZ family. KbaZ subfamily. Forms a complex with KbaY.

It participates in carbohydrate metabolism; D-tagatose 6-phosphate degradation; D-glyceraldehyde 3-phosphate and glycerone phosphate from D-tagatose 6-phosphate: step 2/2. Its function is as follows. Component of the tagatose-1,6-bisphosphate aldolase KbaYZ that is required for full activity and stability of the Y subunit. Could have a chaperone-like function for the proper and stable folding of KbaY. When expressed alone, KbaZ does not show any aldolase activity. This Shigella flexneri protein is D-tagatose-1,6-bisphosphate aldolase subunit KbaZ.